The chain runs to 123 residues: MPTINQLIRKRRKSSLARKKSPALQKCPQKRGVCLQVKTKTPKKPNSALRKVAWVRLSNGQEVIAYIGGEGHNLQEHSIVLIQGGRVKDLPGVRYHIVRGTLDCAAVKNRKQSRSRYGAKRPK.

Residues 1 to 25 are disordered; sequence MPTINQLIRKRRKSSLARKKSPALQ. The segment covering 8–21 has biased composition (basic residues); that stretch reads IRKRRKSSLARKKS. Asp-89 carries the post-translational modification 3-methylthioaspartic acid.

Belongs to the universal ribosomal protein uS12 family. In terms of assembly, part of the 30S ribosomal subunit. Contacts proteins S8 and S17. May interact with IF1 in the 30S initiation complex.

Functionally, with S4 and S5 plays an important role in translational accuracy. Its function is as follows. Interacts with and stabilizes bases of the 16S rRNA that are involved in tRNA selection in the A site and with the mRNA backbone. Located at the interface of the 30S and 50S subunits, it traverses the body of the 30S subunit contacting proteins on the other side and probably holding the rRNA structure together. The combined cluster of proteins S8, S12 and S17 appears to hold together the shoulder and platform of the 30S subunit. The protein is Small ribosomal subunit protein uS12 of Chlamydia pneumoniae (Chlamydophila pneumoniae).